The following is a 462-amino-acid chain: L-seryl-tRNA(Sec) selenium transferase (462 aa).

N6-(pyridoxal phosphate)lysine is present on K293.

Belongs to the SelA family. It depends on pyridoxal 5'-phosphate as a cofactor.

It is found in the cytoplasm. The enzyme catalyses L-seryl-tRNA(Sec) + selenophosphate + H(+) = L-selenocysteinyl-tRNA(Sec) + phosphate. It functions in the pathway aminoacyl-tRNA biosynthesis; selenocysteinyl-tRNA(Sec) biosynthesis; selenocysteinyl-tRNA(Sec) from L-seryl-tRNA(Sec) (bacterial route): step 1/1. Functionally, converts seryl-tRNA(Sec) to selenocysteinyl-tRNA(Sec) required for selenoprotein biosynthesis. The sequence is that of L-seryl-tRNA(Sec) selenium transferase from Clostridium botulinum (strain Loch Maree / Type A3).